The sequence spans 336 residues: Glucan endo-1,3-beta-glucosidase A (336 aa).

Positions 1-23 (MAFLSSLLASLLLVGLLIQITGA) are cleaved as a signal peptide. Glutamine 24 carries the post-translational modification Pyrrolidone carboxylic acid. The active-site Proton donor is glutamate 118. Residue glutamate 257 is the Nucleophile of the active site.

It belongs to the glycosyl hydrolase 17 family.

It localises to the secreted. The protein resides in the extracellular space. It carries out the reaction Hydrolysis of (1-&gt;3)-beta-D-glucosidic linkages in (1-&gt;3)-beta-D-glucans.. In terms of biological role, implicated in the defense of plants against pathogens. The protein is Glucan endo-1,3-beta-glucosidase A of Solanum lycopersicum (Tomato).